We begin with the raw amino-acid sequence, 826 residues long: U4/U6 snRNA-associated-splicing factor PRP24 (826 aa).

RRM domains follow at residues 310 to 385 (TSVF…EAAG), 386 to 463 (ITLY…YSDP), 477 to 554 (REVH…LSVS), and 598 to 670 (RSFA…AVPQ).

The protein resides in the nucleus. Functions as a recycling factor of the spliceosome, a machinery that forms on each precursor-messenger RNA (pre-mRNA) and catalyzes the removal of introns. Chaperones the re-annealing of U4 and U6 snRNAs (small nuclear RNAs) released from previous rounds of splicing, an initial step in reforming the U4/U6-U5 tri-snRNP (small nuclear ribonucleoprotein) that can reassemble into another spliceosome complex; this step involves binding U6 and facilitating the unwinding of the U6 internal stem loop, followed by base-pairing of U6 to U4. The sequence is that of U4/U6 snRNA-associated-splicing factor PRP24 from Ophiostoma ulmi (Dutch elm disease fungus).